Reading from the N-terminus, the 218-residue chain is Transmembrane gamma-carboxyglutamic acid protein 1 (218 aa).

A propeptide spanning residues 1–20 (MGRVFLTGEKANSILKRYPR) is cleaved from the precursor. The 46-residue stretch at 21 to 66 (ANGFFEEIRQGNIERECKEEFCTFEEAREAFENNEKTKEFWSTYTK) folds into the Gla domain. Over 21–83 (ANGFFEEIRQ…RGSDWFQFYL (63 aa)) the chain is Extracellular. An intrachain disulfide couples Cys37 to Cys42. Residues 84 to 106 (TFPLIFGLFIILLVIFLIWRCFL) traverse the membrane as a helical segment. At 107–218 (RNKTRRQTVT…PMVPVVTTIK (112 aa)) the chain is on the cytoplasmic side. A disordered region spans residues 161 to 195 (TRLSNCDPPPTYEEATGQVNLQRSETEPHLDPPPE).

Post-translationally, gla residues are produced after subsequent post-translational modifications of glutamate by a vitamin K-dependent gamma-carboxylase. As to expression, highly expressed in the spinal cord.

The protein resides in the membrane. The sequence is that of Transmembrane gamma-carboxyglutamic acid protein 1 (PRRG1) from Homo sapiens (Human).